Consider the following 297-residue polypeptide: Calponin-1 (297 aa).

Residues 28 to 131 (HQREQELREW…STLLALASMA (104 aa)) enclose the Calponin-homology (CH) domain. Ser48 is subject to Phosphoserine. 3 Calponin-like repeats span residues 164–189 (IGLQMGTNKFASQQGMTAYGTRRHLY), 204–229 (ISLQMGTNKGASQAGMTAPGTKRQIF), and 243–268 (VSLQMGSNKGASQRGMTVYGLPRQVY). Position 170 is a phosphothreonine; by ROCK2 (Thr170). Phosphoserine; by ROCK2 is present on Ser175. Thr180 and Thr184 each carry phosphothreonine; by ROCK2. Phosphothreonine; by ROCK2 is present on Thr259.

Belongs to the calponin family. In terms of assembly, part of cGMP kinase signaling complex at least composed of ACTA2/alpha-actin, CNN1/calponin H1, PLN/phospholamban, PRKG1 and ITPR1. As to expression, smooth muscle, and tissues containing significant amounts of smooth muscle.

In terms of biological role, thin filament-associated protein that is implicated in the regulation and modulation of smooth muscle contraction. It is capable of binding to actin, calmodulin and tropomyosin. The interaction of calponin with actin inhibits the actomyosin Mg-ATPase activity. This Rattus norvegicus (Rat) protein is Calponin-1 (Cnn1).